The sequence spans 230 residues: 2,3-bisphosphoglycerate-dependent phosphoglycerate mutase 1 (230 aa).

Substrate contacts are provided by residues 8-15 (RHGQSEWN), 21-22 (TG), R60, 87-90 (ERHY), K98, 114-115 (RR), and 183-184 (GN). Catalysis depends on H9, which acts as the Tele-phosphohistidine intermediate. E87 functions as the Proton donor/acceptor in the catalytic mechanism.

This sequence belongs to the phosphoglycerate mutase family. BPG-dependent PGAM subfamily.

It carries out the reaction (2R)-2-phosphoglycerate = (2R)-3-phosphoglycerate. It functions in the pathway carbohydrate degradation; glycolysis; pyruvate from D-glyceraldehyde 3-phosphate: step 3/5. Its function is as follows. Catalyzes the interconversion of 2-phosphoglycerate and 3-phosphoglycerate. The polypeptide is 2,3-bisphosphoglycerate-dependent phosphoglycerate mutase 1 (Lactobacillus johnsonii (strain CNCM I-12250 / La1 / NCC 533)).